A 560-amino-acid polypeptide reads, in one-letter code: Choline/ethanolamine transporter FLVCR1 (560 aa).

The disordered stretch occupies residues Met-1–Tyr-22. At Met-1–Pro-99 the chain is on the cytoplasmic side. Ser-56 carries the phosphoserine modification. A disordered region spans residues Gln-68 to Pro-99. The span at Pro-83–Gly-95 shows a compositional bias: low complexity. Residues Gln-100 to Gln-124 traverse the membrane as a helical segment. Topologically, residues Trp-125–Ser-142 are extracellular. The helical transmembrane segment at Ser-143–Thr-170 threads the bilayer. At Arg-171–Gly-172 the chain is on the cytoplasmic side. Residues Leu-173–Cys-192 traverse the membrane as a helical segment. Over Ala-193–Leu-199 the chain is Extracellular. The helical transmembrane segment at Phe-200–Trp-228 threads the bilayer. Ethanolamine is bound at residue Gln-214. Over Phe-229–Glu-233 the chain is Cytoplasmic. Residues Val-234–Leu-259 form a helical membrane-spanning segment. The Extracellular portion of the chain corresponds to Val-260–Asn-265. Asn-265 is a glycosylation site (N-linked (GlcNAc...) asparagine). A helical transmembrane segment spans residues Asn-266–Ala-295. Residues Phe-296–Asn-331 lie on the Cytoplasmic side of the membrane. Residues Val-332 to Tyr-362 traverse the membrane as a helical segment. Over Tyr-363–Glu-366 the chain is Extracellular. Residues Glu-367–Thr-395 form a helical membrane-spanning segment. Topologically, residues Lys-396–Ile-397 are cytoplasmic. The helical transmembrane segment at Tyr-398–Leu-420 threads the bilayer. Topologically, residues Asp-421 to Gly-423 are extracellular. The chain crosses the membrane as a helical span at residues Tyr-424–Ile-453. Over Thr-454–Thr-461 the chain is Cytoplasmic. Residues Ser-462 to Asp-487 form a helical membrane-spanning segment. Gln-471 is an ethanolamine binding site. Residue Gln-471 participates in choline binding. Residues Tyr-488–Ser-489 are Extracellular-facing. The chain crosses the membrane as a helical span at residues Pro-490–Lys-512. The Cytoplasmic segment spans residues Ser-513–Ile-560. The interval Thr-537–Ile-560 is disordered. Ser-541 bears the Phosphoserine mark. Over residues Ile-550–Ile-560 the composition is skewed to polar residues.

This sequence belongs to the major facilitator superfamily. Feline leukemia virus subgroup C receptor (TC 2.A.1.28.1) family.

Its subcellular location is the cell membrane. The catalysed reaction is choline(out) = choline(in). The enzyme catalyses ethanolamine(in) = ethanolamine(out). It catalyses the reaction heme b(in) = heme b(out). Uniporter that mediates the transport of extracellular choline and ethanolamine into cells, thereby playing a key role in phospholipid biosynthesis. Choline and ethanolamine are the precursors of phosphatidylcholine and phosphatidylethanolamine, respectively, the two most abundant phospholipids. Transport is not coupled with proton transport and is exclusively driven by the choline (or ethanolamine) gradient across the plasma membrane. Also acts as a heme b transporter that mediates heme efflux from the cytoplasm to the extracellular compartment. Functionally, (Microbial infection) Confers susceptibility to Feline leukemia virus subgroup C (FeLV-C) infection, which is associated with fatal erythroid aplasia, also known as aplastic anemia. In Felis catus (Cat), this protein is Choline/ethanolamine transporter FLVCR1 (FLVCR1).